The following is a 358-amino-acid chain: Methionine aminopeptidase 2 (358 aa).

Histidine 109 is a binding site for substrate. Positions 130, 141, and 210 each coordinate a divalent metal cation. Histidine 218 lines the substrate pocket. Residues glutamate 243 and glutamate 339 each coordinate a divalent metal cation.

Belongs to the peptidase M24A family. Methionine aminopeptidase eukaryotic type 2 subfamily. It depends on Co(2+) as a cofactor. Zn(2+) serves as cofactor. The cofactor is Mn(2+). Requires Fe(2+) as cofactor.

Its subcellular location is the cytoplasm. It catalyses the reaction Release of N-terminal amino acids, preferentially methionine, from peptides and arylamides.. Its activity is regulated as follows. Irreversibly inhibited by the fungal metabolite fumagillin and the fumagillin analog TNP470, antiangiogenic drugs. Functionally, cotranslationally removes the N-terminal methionine from nascent proteins. The N-terminal methionine is often cleaved when the second residue in the primary sequence is small and uncharged (Met-Ala-, Cys, Gly, Pro, Ser, Thr, or Val). This chain is Methionine aminopeptidase 2, found in Encephalitozoon hellem (strain ATCC 50504) (Microsporidian parasite).